The sequence spans 124 residues: Small ribosomal subunit protein uS12 (124 aa).

A 3-methylthioaspartic acid modification is found at aspartate 89.

Belongs to the universal ribosomal protein uS12 family. As to quaternary structure, part of the 30S ribosomal subunit. Contacts proteins S8 and S17. May interact with IF1 in the 30S initiation complex.

In terms of biological role, with S4 and S5 plays an important role in translational accuracy. Its function is as follows. Interacts with and stabilizes bases of the 16S rRNA that are involved in tRNA selection in the A site and with the mRNA backbone. Located at the interface of the 30S and 50S subunits, it traverses the body of the 30S subunit contacting proteins on the other side and probably holding the rRNA structure together. The combined cluster of proteins S8, S12 and S17 appears to hold together the shoulder and platform of the 30S subunit. In Aliivibrio salmonicida (strain LFI1238) (Vibrio salmonicida (strain LFI1238)), this protein is Small ribosomal subunit protein uS12.